The chain runs to 271 residues: Effector CFEM6 (271 aa).

The first 17 residues, 1–17 (MKYSMITLGAFAMMAVA), serve as a signal peptide directing secretion. Residues 18–111 (QLSSLPACGQ…LGPATAVVAS (94 aa)) form the CFEM domain. Cystine bridges form between cysteine 25–cysteine 68, cysteine 29–cysteine 63, cysteine 42–cysteine 49, and cysteine 51–cysteine 84. A heme-binding site is contributed by aspartate 46. The GPI-anchor amidated serine moiety is linked to residue serine 247. A propeptide spans 248 to 271 (SAGGARQTAFAGLAAAAGFAAIIL) (removed in mature form).

Belongs to the RBT5 family.

The protein localises to the cell membrane. It localises to the secreted. Its subcellular location is the host nucleus. It is found in the host cell membrane. The protein resides in the host chloroplast envelope. Functionally, appears to function during host infection, and may play a role in suppressing the host immune response. This chain is Effector CFEM6, found in Marssonina brunnea f. sp. multigermtubi (strain MB_m1) (Marssonina leaf spot fungus).